Here is a 274-residue protein sequence, read N- to C-terminus: 3-methyl-2-oxobutanoate hydroxymethyltransferase (274 aa).

Positions 49 and 88 each coordinate Mg(2+). 3-methyl-2-oxobutanoate contacts are provided by residues 49–50 (DS), aspartate 88, and lysine 118. Glutamate 120 is a binding site for Mg(2+). The active-site Proton acceptor is the glutamate 187.

The protein belongs to the PanB family. Homodecamer; pentamer of dimers. Requires Mg(2+) as cofactor.

Its subcellular location is the cytoplasm. It catalyses the reaction 3-methyl-2-oxobutanoate + (6R)-5,10-methylene-5,6,7,8-tetrahydrofolate + H2O = 2-dehydropantoate + (6S)-5,6,7,8-tetrahydrofolate. It participates in cofactor biosynthesis; (R)-pantothenate biosynthesis; (R)-pantoate from 3-methyl-2-oxobutanoate: step 1/2. In terms of biological role, catalyzes the reversible reaction in which hydroxymethyl group from 5,10-methylenetetrahydrofolate is transferred onto alpha-ketoisovalerate to form ketopantoate. This Allorhizobium ampelinum (strain ATCC BAA-846 / DSM 112012 / S4) (Agrobacterium vitis (strain S4)) protein is 3-methyl-2-oxobutanoate hydroxymethyltransferase.